Here is a 324-residue protein sequence, read N- to C-terminus: tRNA uridine(34) hydroxylase (324 aa).

The Rhodanese domain occupies 122–218 (QENRCLILDV…YGQQVGTGKW (97 aa)). Residue Cys-178 is the Cysteine persulfide intermediate of the active site.

This sequence belongs to the TrhO family.

The enzyme catalyses uridine(34) in tRNA + AH2 + O2 = 5-hydroxyuridine(34) in tRNA + A + H2O. In terms of biological role, catalyzes oxygen-dependent 5-hydroxyuridine (ho5U) modification at position 34 in tRNAs. This chain is tRNA uridine(34) hydroxylase, found in Chlamydia pneumoniae (Chlamydophila pneumoniae).